A 429-amino-acid chain; its full sequence is Argininosuccinate lyase (429 aa).

Belongs to the lyase 1 family. Argininosuccinate lyase subfamily.

Its subcellular location is the cytoplasm. It catalyses the reaction 2-(N(omega)-L-arginino)succinate = fumarate + L-arginine. The protein operates within amino-acid biosynthesis; L-arginine biosynthesis; L-arginine from L-ornithine and carbamoyl phosphate: step 3/3. This is Argininosuccinate lyase from Pyrobaculum calidifontis (strain DSM 21063 / JCM 11548 / VA1).